The following is a 425-amino-acid chain: Monoacylglycerol lipase ABHD2 (425 aa).

Residues 1–9 (MNAMMETSE) are Cytoplasmic-facing. A helical; Signal-anchor for type II membrane protein transmembrane segment spans residues 10 to 30 (LPAVFDGVKLAAVAAVLYVIV). Topologically, residues 31–425 (RCLNLKSPTA…DTELVEADLE (395 aa)) are extracellular. Residues 128 to 382 (MVICPGIANH…HGGHLGFFEG (255 aa)) enclose the AB hydrolase-1 domain. An N-linked (GlcNAc...) asparagine glycan is attached at asparagine 136. Catalysis depends on serine 207, which acts as the Nucleophile. Active-site charge relay system residues include aspartate 345 and histidine 376. Asparagine 410 carries an N-linked (GlcNAc...) asparagine glycan.

The protein belongs to the AB hydrolase superfamily. AB hydrolase 4 family.

It is found in the cell membrane. The enzyme catalyses Hydrolyzes glycerol monoesters of long-chain fatty acids.. The catalysed reaction is an acetyl ester + H2O = an aliphatic alcohol + acetate + H(+). It catalyses the reaction a triacylglycerol + H2O = a diacylglycerol + a fatty acid + H(+). It carries out the reaction 2-(5Z,8Z,11Z,14Z-eicosatetraenoyl)-glycerol + H2O = glycerol + (5Z,8Z,11Z,14Z)-eicosatetraenoate + H(+). The enzyme catalyses a butanoate ester + H2O = an aliphatic alcohol + butanoate + H(+). The catalysed reaction is hexadecanoate ester + H2O = an aliphatic alcohol + hexadecanoate + H(+). Its activity is regulated as follows. Acylglycerol lipase activity is activated upon binding to progesterone. Its function is as follows. Progesterone-dependent acylglycerol lipase that catalyzes hydrolysis of endocannabinoid arachidonoylglycerol (AG) from cell membrane. Acts as a progesterone receptor: progesterone-binding activates the acylglycerol lipase activity, mediating degradation of 1-arachidonoylglycerol (1AG) and 2-arachidonoylglycerol (2AG) to glycerol and arachidonic acid (AA). Also displays an ester hydrolase activity against acetyl ester, butanoate ester and hexadecanoate ester. Plays a key role in sperm capacitation in response to progesterone by mediating degradation of 2AG, an inhibitor of the sperm calcium channel CatSper, leading to calcium influx via CatSper and sperm activation. May also play a role in smooth muscle cells migration. In Bos taurus (Bovine), this protein is Monoacylglycerol lipase ABHD2 (ABHD2).